The primary structure comprises 35 residues: uncharacterized protein (35 aa).

The N-terminal stretch at 1 to 18 (MRSLVFVQLSLLSWEIFC) is a signal peptide.

This is an uncharacterized protein from Saccharomyces cerevisiae (strain ATCC 204508 / S288c) (Baker's yeast).